A 291-amino-acid polypeptide reads, in one-letter code: MTSAMKKIQPEAFSEKSSDSQASVSGAKSSSFYIGMRVLPPAEREAMYAIYNFCRQVDDIADDLEGSQEERKQALDAWRHDINALYAGEPCGQAAFLKEPVARFHLRQEDFIAVIDGMAMDLKGPIVFPDEATLDLYCDRVASAVGRLSVYVFGMDPNIGESLAYHLGRALQLTNILRDIDEDAEIGRCYLPREPLEKAGIPLDIEKALADPRLDKVCRDLAWQAEGHYAASDHIIHNRPKGYLIAPRLMAAAYSALLRKMLAQGWKNPRKKVKHNKLALLWTLLRLKVTS.

The segment at Met1 to Ser23 is disordered.

It belongs to the phytoene/squalene synthase family. HpnD subfamily.

It catalyses the reaction 2 (2E,6E)-farnesyl diphosphate = presqualene diphosphate + diphosphate. It functions in the pathway secondary metabolite biosynthesis; hopanoid biosynthesis. In terms of biological role, involved in the biosynthesis of the hopanoid precursor squalene (SQ) from farnesyl diphosphate (FPP). Catalyzes the first step, the formation of presqualene diphosphate (PSPP) from two molecules of FPP. The chain is Presqualene diphosphate synthase from Zymomonas mobilis subsp. mobilis (strain ATCC 31821 / ZM4 / CP4).